The following is a 226-amino-acid chain: Protein Thf1 (226 aa).

A coiled-coil region spans residues 183–213 (EEKMQKDLDLYRSNLEKMDQLLTVIEEALQA).

It belongs to the THF1 family.

May be involved in photosynthetic membrane biogenesis. This Gloeothece citriformis (strain PCC 7424) (Cyanothece sp. (strain PCC 7424)) protein is Protein Thf1.